We begin with the raw amino-acid sequence, 101 residues long: MNLERVSNEEKLNLCRKYYLGGFAFLPFLWLVNIFWFFKEAFFAPAYTEQSQIKGYVWRSAVGFLFWVIVLTTWITIFQIYRPRWGALGDYLSFTIPLGTP.

Over 1–17 (MNLERVSNEEKLNLCRK) the chain is Cytoplasmic. Positions 18–36 (YYLGGFAFLPFLWLVNIFW) form an intramembrane region, helical. The Cytoplasmic segment spans residues 37–57 (FFKEAFFAPAYTEQSQIKGYV). Residues 58–78 (WRSAVGFLFWVIVLTTWITIF) form a helical membrane-spanning segment. The Lumenal segment spans residues 79–101 (QIYRPRWGALGDYLSFTIPLGTP).

The protein belongs to the PEN-2 family. The functional gamma-secretase complex is composed of at least four polypeptides: a presenilin homodimer (PSEN1 or PSEN2), nicastrin (NCSTN), APH1 (APH1A or APH1B) and PSENEN.

The protein resides in the endoplasmic reticulum membrane. It is found in the golgi apparatus. Its subcellular location is the golgi stack membrane. The protein localises to the cell membrane. It localises to the membrane. Functionally, essential subunit of the gamma-secretase complex, an endoprotease complex that catalyzes the intramembrane cleavage of integral membrane proteins such as Notch receptors and APP (amyloid-beta precursor protein). The gamma-secretase complex plays a role in Notch and Wnt signaling cascades and regulation of downstream processes via its role in processing key regulatory proteins, and by regulating cytosolic CTNNB1 levels. PSENEN modulates both endoproteolysis of presenilin and gamma-secretase activity. In Rattus norvegicus (Rat), this protein is Gamma-secretase subunit PEN-2 (Psenen).